The chain runs to 283 residues: Acetylglutamate kinase (283 aa).

Substrate contacts are provided by residues 64-65, arginine 86, and asparagine 181; that span reads GG.

Belongs to the acetylglutamate kinase family. ArgB subfamily.

The protein resides in the cytoplasm. The enzyme catalyses N-acetyl-L-glutamate + ATP = N-acetyl-L-glutamyl 5-phosphate + ADP. The protein operates within amino-acid biosynthesis; L-arginine biosynthesis; N(2)-acetyl-L-ornithine from L-glutamate: step 2/4. Its function is as follows. Catalyzes the ATP-dependent phosphorylation of N-acetyl-L-glutamate. In Sulfurimonas denitrificans (strain ATCC 33889 / DSM 1251) (Thiomicrospira denitrificans (strain ATCC 33889 / DSM 1251)), this protein is Acetylglutamate kinase.